A 111-amino-acid polypeptide reads, in one-letter code: Large ribosomal subunit protein uL23 (111 aa).

The protein belongs to the universal ribosomal protein uL23 family. As to quaternary structure, part of the 50S ribosomal subunit. Contacts protein L29, and trigger factor when it is bound to the ribosome.

One of the early assembly proteins it binds 23S rRNA. One of the proteins that surrounds the polypeptide exit tunnel on the outside of the ribosome. Forms the main docking site for trigger factor binding to the ribosome. This Nitrosospira multiformis (strain ATCC 25196 / NCIMB 11849 / C 71) protein is Large ribosomal subunit protein uL23.